The chain runs to 429 residues: Trigger factor (429 aa).

A PPIase FKBP-type domain is found at 162-247 (DDTVDLAFEG…INAIKKLRQP (86 aa)).

The protein belongs to the FKBP-type PPIase family. Tig subfamily.

It localises to the cytoplasm. The enzyme catalyses [protein]-peptidylproline (omega=180) = [protein]-peptidylproline (omega=0). Its function is as follows. Involved in protein export. Acts as a chaperone by maintaining the newly synthesized protein in an open conformation. Functions as a peptidyl-prolyl cis-trans isomerase. The polypeptide is Trigger factor (Fusobacterium nucleatum subsp. nucleatum (strain ATCC 25586 / DSM 15643 / BCRC 10681 / CIP 101130 / JCM 8532 / KCTC 2640 / LMG 13131 / VPI 4355)).